Reading from the N-terminus, the 139-residue chain is Actin-depolymerizing factor (139 aa).

An ADF-H domain is found at 5 to 139 (SSGMAVDDEC…SMDIIKARAF (135 aa)).

The protein belongs to the actin-binding proteins ADF family. Preferentially in mature anther.

In terms of biological role, actin-depolymerizing protein. Severs actin filaments (F-actin) and binds to actin monomers. In Lilium longiflorum (Trumpet lily), this protein is Actin-depolymerizing factor.